A 511-amino-acid polypeptide reads, in one-letter code: 2-isopropylmalate synthase (511 aa).

One can recognise a Pyruvate carboxyltransferase domain in the interval 5–267; that stretch reads LIVFDTTLRD…DTNVDISQIV (263 aa). Positions 14, 202, 204, and 238 each coordinate Mn(2+). Residues 393–511 are regulatory domain; the sequence is KLSWLKVVSE…YPVERAYPQV (119 aa).

The protein belongs to the alpha-IPM synthase/homocitrate synthase family. LeuA type 1 subfamily. Homodimer. It depends on Mn(2+) as a cofactor.

Its subcellular location is the cytoplasm. The enzyme catalyses 3-methyl-2-oxobutanoate + acetyl-CoA + H2O = (2S)-2-isopropylmalate + CoA + H(+). Its pathway is amino-acid biosynthesis; L-leucine biosynthesis; L-leucine from 3-methyl-2-oxobutanoate: step 1/4. Functionally, catalyzes the condensation of the acetyl group of acetyl-CoA with 3-methyl-2-oxobutanoate (2-ketoisovalerate) to form 3-carboxy-3-hydroxy-4-methylpentanoate (2-isopropylmalate). This chain is 2-isopropylmalate synthase, found in Nitrosococcus oceani (strain ATCC 19707 / BCRC 17464 / JCM 30415 / NCIMB 11848 / C-107).